Reading from the N-terminus, the 353-residue chain is Photosystem II D2 protein (353 aa).

An N-acetylthreonine modification is found at Thr-2. Thr-2 is modified (phosphothreonine). A helical membrane pass occupies residues 41–61 (CAYFALGGWFTGTTFVTSWYT). His-118 is a chlorophyll a binding site. The helical transmembrane segment at 125–141 (GFMLRQFELARSVQLRP) threads the bilayer. 2 residues coordinate pheophytin a: Gln-130 and Asn-143. Residues 153–166 (VFVSVFLIYPLGQS) form a helical membrane-spanning segment. His-198 serves as a coordination point for chlorophyll a. The chain crosses the membrane as a helical span at residues 208-228 (AALLCAIHGATVENTLFEDGD). The a plastoquinone site is built by His-215 and Phe-262. Residue His-215 coordinates Fe cation. Residue His-269 participates in Fe cation binding. Residues 279–295 (GLWMSALGVVGLALNLR) traverse the membrane as a helical segment.

Belongs to the reaction center PufL/M/PsbA/D family. As to quaternary structure, PSII is composed of 1 copy each of membrane proteins PsbA, PsbB, PsbC, PsbD, PsbE, PsbF, PsbH, PsbI, PsbJ, PsbK, PsbL, PsbM, PsbT, PsbX, PsbY, PsbZ, Psb30/Ycf12, at least 3 peripheral proteins of the oxygen-evolving complex and a large number of cofactors. It forms dimeric complexes. It depends on The D1/D2 heterodimer binds P680, chlorophylls that are the primary electron donor of PSII, and subsequent electron acceptors. It shares a non-heme iron and each subunit binds pheophytin, quinone, additional chlorophylls, carotenoids and lipids. There is also a Cl(-1) ion associated with D1 and D2, which is required for oxygen evolution. The PSII complex binds additional chlorophylls, carotenoids and specific lipids. as a cofactor.

It is found in the plastid. The protein localises to the chloroplast thylakoid membrane. The catalysed reaction is 2 a plastoquinone + 4 hnu + 2 H2O = 2 a plastoquinol + O2. Photosystem II (PSII) is a light-driven water:plastoquinone oxidoreductase that uses light energy to abstract electrons from H(2)O, generating O(2) and a proton gradient subsequently used for ATP formation. It consists of a core antenna complex that captures photons, and an electron transfer chain that converts photonic excitation into a charge separation. The D1/D2 (PsbA/PsbD) reaction center heterodimer binds P680, the primary electron donor of PSII as well as several subsequent electron acceptors. D2 is needed for assembly of a stable PSII complex. The protein is Photosystem II D2 protein of Dioscorea elephantipes (Elephant's foot yam).